Reading from the N-terminus, the 230-residue chain is Demethylmenaquinone methyltransferase (230 aa).

Residues T57, D77, and 101 to 102 contribute to the S-adenosyl-L-methionine site; that span reads DI.

This sequence belongs to the class I-like SAM-binding methyltransferase superfamily. MenG/UbiE family.

The catalysed reaction is a 2-demethylmenaquinol + S-adenosyl-L-methionine = a menaquinol + S-adenosyl-L-homocysteine + H(+). The protein operates within quinol/quinone metabolism; menaquinone biosynthesis; menaquinol from 1,4-dihydroxy-2-naphthoate: step 2/2. Functionally, methyltransferase required for the conversion of demethylmenaquinol (DMKH2) to menaquinol (MKH2). In Chlamydia pneumoniae (Chlamydophila pneumoniae), this protein is Demethylmenaquinone methyltransferase.